A 701-amino-acid chain; its full sequence is Sulfate anion transporter 1 (701 aa).

The disordered stretch occupies residues 1–20; sequence MDESPEPLQQGRGPVPVRRQ. The next 2 membrane-spanning stretches (helical) occupy residues 68–90 and 94–116; these read YLAG…AIAY and AGLQ…FLMG. 2 N-linked (GlcNAc...) asparagine glycosylation sites follow: Asn-158 and Asn-163. The next 7 membrane-spanning stretches (helical) occupy residues 176–198, 255–277, 290–309, 342–364, 377–399, 412–434, and 472–494; these read YAIR…MGVL, GAGQ…LLAA, VPLP…SHFG, ALDA…EMFA, LLAV…SAAL, TQLS…APLF, and LVWA…LAGV. Positions 527-687 constitute an STAS domain; the sequence is EFEGLVPEPG…LSVHDAVQTA (161 aa).

Belongs to the SLC26A/SulP transporter (TC 2.A.53) family. In terms of tissue distribution, expressed most abundantly in the kidney and liver, with lower levels in the pancreas, testis, brain, small intestine, colon, and lung.

The protein localises to the cell membrane. Its subcellular location is the basolateral cell membrane. The catalysed reaction is thiosulfate(in) + sulfate(out) = thiosulfate(out) + sulfate(in). The enzyme catalyses 2 hydrogencarbonate(out) + sulfate(in) = 2 hydrogencarbonate(in) + sulfate(out). It catalyses the reaction oxalate(in) + sulfate(out) = oxalate(out) + sulfate(in). It carries out the reaction oxalate(in) + 2 hydrogencarbonate(out) = oxalate(out) + 2 hydrogencarbonate(in). Sodium-independent sulfate anion transporter. Can transport other anions including bicarbonate, thiosulfate and oxalate by mediating sulfate-thiosulfate, sulfate-hydrogencarbonate and sulfate-oxalate anion exchange. Mediates oxalate-hydrogencarbonate anion exchange. The protein is Sulfate anion transporter 1 (SLC26A1) of Homo sapiens (Human).